A 153-amino-acid chain; its full sequence is Nucleoside diphosphate kinase (153 aa).

The ATP site is built by Lys9, Phe57, Arg85, Thr91, Arg102, and Asn112. Residue His115 is the Pros-phosphohistidine intermediate of the active site.

This sequence belongs to the NDK family. In terms of assembly, homotetramer. Requires Mg(2+) as cofactor.

It is found in the cytoplasm. The catalysed reaction is a 2'-deoxyribonucleoside 5'-diphosphate + ATP = a 2'-deoxyribonucleoside 5'-triphosphate + ADP. It catalyses the reaction a ribonucleoside 5'-diphosphate + ATP = a ribonucleoside 5'-triphosphate + ADP. Major role in the synthesis of nucleoside triphosphates other than ATP. The ATP gamma phosphate is transferred to the NDP beta phosphate via a ping-pong mechanism, using a phosphorylated active-site intermediate. The protein is Nucleoside diphosphate kinase of Parabacteroides distasonis (strain ATCC 8503 / DSM 20701 / CIP 104284 / JCM 5825 / NCTC 11152).